A 455-amino-acid chain; its full sequence is Golgi pH regulator (455 aa).

The next 5 membrane-spanning stretches (helical) occupy residues 5–25, 46–66, 79–99, 114–134, and 150–170; these read IDSS…WLFF, VTFA…LGVL, LCVI…YFIV, CLLW…FPIL, and VGVI…VNCP. 2 N-linked (GlcNAc...) asparagine glycosylation sites follow: N180 and N243. The next 4 membrane-spanning stretches (helical) occupy residues 290-310, 343-363, 378-398, and 425-445; these read GYFF…NIVL, ISFI…LITL, VIVL…VLLI, and WFDV…YLAH.

Belongs to the Golgi pH regulator (TC 1.A.38) family. As to quaternary structure, homotrimer. Interacts with RABL3; the interaction stabilizes GPR89B.

The protein resides in the golgi apparatus membrane. It carries out the reaction iodide(out) = iodide(in). The enzyme catalyses chloride(in) = chloride(out). It catalyses the reaction bromide(in) = bromide(out). The catalysed reaction is fluoride(in) = fluoride(out). Voltage-gated channel that enables the transfer of anions such as iodide, chloride, bromide and fluoride which may function in counter-ion conductance and participates in Golgi acidification. Plays a role in lymphocyte development, probably by acting as a RABL3 effector in hematopoietic cells. This chain is Golgi pH regulator, found in Cricetulus griseus (Chinese hamster).